The following is a 76-amino-acid chain: Small ribosomal subunit protein bS18 (76 aa).

The protein belongs to the bacterial ribosomal protein bS18 family. In terms of assembly, part of the 30S ribosomal subunit. Forms a tight heterodimer with protein bS6.

In terms of biological role, binds as a heterodimer with protein bS6 to the central domain of the 16S rRNA, where it helps stabilize the platform of the 30S subunit. In Xylella fastidiosa (strain 9a5c), this protein is Small ribosomal subunit protein bS18.